A 54-amino-acid chain; its full sequence is Snake venom 5'-nucleotidase (54 aa).

Residues aspartate 11 and histidine 13 each contribute to the Zn(2+) site. The N-linked (GlcNAc...) asparagine glycan is linked to asparagine 46.

It belongs to the 5'-nucleotidase family. Zn(2+) is required as a cofactor. Post-translationally, venom 5'-nucleotidases (or a part thereof) may be released into the venom via exosome-like vesicles. They may be attached via a GPI anchor to the membrane of these vesicles. Soluble forms of 5'-nucleotidase might be released by cleavage of the ectodomain in the exosome-like vesicles or venom gland cells. In terms of tissue distribution, expressed by the venom gland.

The protein resides in the membrane. It catalyses the reaction a ribonucleoside 5'-phosphate + H2O = a ribonucleoside + phosphate. Its function is as follows. Hydrolyzes nucleotides into nucleosides. Snake venom 5'-nucleotidases are widely distributed among venomous snake taxa, but there is a lack of information about their biological activities. They have been shown to inhibit platelet aggregation. This effect may be due to the liberation of inhibitory AMP or adenosine by its action on ADP released upon initiation of aggregation. Venom 5'-nucleotidases are also known to synergistically act in vivo with other toxins like ADPases, phospholipases, and disintegrins to exert a more pronounced anti-coagulant effect. In Gloydius blomhoffii blomhoffii (Japanese mamushi), this protein is Snake venom 5'-nucleotidase.